The chain runs to 408 residues: Argininosuccinate synthase (408 aa).

Position 8–16 (8–16 (AYSGGLDTT)) interacts with ATP. Tyr-86 is an L-citrulline binding site. Residue Gly-116 coordinates ATP. L-aspartate contacts are provided by Thr-118, Asn-122, and Asp-123. Asn-122 is an L-citrulline binding site. Arg-126, Ser-177, Ser-186, Glu-263, and Tyr-275 together coordinate L-citrulline.

Belongs to the argininosuccinate synthase family. Type 1 subfamily. Homotetramer.

It localises to the cytoplasm. The catalysed reaction is L-citrulline + L-aspartate + ATP = 2-(N(omega)-L-arginino)succinate + AMP + diphosphate + H(+). The protein operates within amino-acid biosynthesis; L-arginine biosynthesis; L-arginine from L-ornithine and carbamoyl phosphate: step 2/3. The chain is Argininosuccinate synthase from Agathobacter rectalis (strain ATCC 33656 / DSM 3377 / JCM 17463 / KCTC 5835 / VPI 0990) (Eubacterium rectale).